The sequence spans 196 residues: MFITFEGIDGSGKTTQSKLLANHFKQIRGENNVVLTREPGGTNFAEKVRGVLLTNNIDSISELLLLISMRREHMKKLILPALAEGKIVICDRFIDSTIAYQGYGFGVDLRLIRDLHKLVEIKYPDITFILDIDVKVGLNRAKDKNKYEEMDVNFYNKVRKGFQEIAIKEPVRCSVITGIETKNDNHVHNEIIDKIT.

Residue 7 to 14 participates in ATP binding; sequence GIDGSGKT.

The protein belongs to the thymidylate kinase family.

It catalyses the reaction dTMP + ATP = dTDP + ADP. Its function is as follows. Phosphorylation of dTMP to form dTDP in both de novo and salvage pathways of dTTP synthesis. The polypeptide is Thymidylate kinase (Wolbachia pipientis wMel).